Here is a 251-residue protein sequence, read N- to C-terminus: MLSLDLMSHTLDAELSTKARILVVEDEAVIRDMIVMGLEEEGYEVFFADNGRTGLNMLQNPEFNAPDMPLDLVILDIMLPEVNGLDLCRFLRYQGNTIPILVLSAKASETDRVLGLEVGADDYLTKPFSLRELVARCRALLRRQQFIRSTPKNSVRQFKDISLFPEECRVTVRGEEVSLSPKEYRLLELFMSYPRRVWSRDQLIEQVWGADFLGDTKTVDVHIRWLREKLELDPSQPEYLITVRGFGYRFG.

Residues 20–141 (RILVVEDEAV…ELVARCRALL (122 aa)) form the Response regulatory domain. D76 is subject to 4-aspartylphosphate. The ompR/PhoB-type DNA-binding region spans 153-251 (NSVRQFKDIS…TVRGFGYRFG (99 aa)).

In terms of processing, phosphorylation.

In Picosynechococcus sp. (strain ATCC 27264 / PCC 7002 / PR-6) (Agmenellum quadruplicatum), this protein is Probable transcriptional regulatory protein SYNPCC7002_A0851.